A 126-amino-acid polypeptide reads, in one-letter code: Glycine cleavage system H protein (126 aa).

In terms of domain architecture, Lipoyl-binding spans 22–104 (VAIIGITEYA…YEKAWMVKVE (83 aa)). At lysine 63 the chain carries N6-lipoyllysine.

It belongs to the GcvH family. As to quaternary structure, the glycine cleavage system is composed of four proteins: P, T, L and H. It depends on (R)-lipoate as a cofactor.

Functionally, the glycine cleavage system catalyzes the degradation of glycine. The H protein shuttles the methylamine group of glycine from the P protein to the T protein. In terms of biological role, is also involved in protein lipoylation via its role as an octanoyl/lipoyl carrier protein intermediate. The chain is Glycine cleavage system H protein from Staphylococcus aureus (strain USA300).